The chain runs to 515 residues: Gap junction alpha-9 protein (515 aa).

At 1–19 (MGDWNLLGDTLEEVHIHST) the chain is on the cytoplasmic side. The chain crosses the membrane as a helical span at residues 20–40 (MIGKIWLTILFIFRMLVLGVA). Residues 41 to 77 (AEDVWNDEQSGFICNTEQPGCRNVCYDQAFPISLIRY) lie on the Extracellular side of the membrane. Residues 78–98 (WVLQVIFVSSPSLVYMGHALY) form a helical membrane-spanning segment. Residues 99 to 166 (RLRVLEEERQ…YVIHIFTRSV (68 aa)) are Cytoplasmic-facing. Residues 167–187 (VEVGFMIGQYLLYGFHLEPLF) form a helical membrane-spanning segment. The Extracellular segment spans residues 188–209 (KCHGHPCPNIIDCFVSRPTEKT). Residues 210-230 (IFLLFMQSIATISLFLNILEI) traverse the membrane as a helical segment. Over 231-515 (FHLGFKKIKR…GRRVPTDLQI (285 aa)) the chain is Cytoplasmic. Positions 370-380 (KRETEGKDSKR) are enriched in basic and acidic residues. Disordered stretches follow at residues 370-400 (KRET…GENN) and 428-472 (SSTE…NTAD). A compositionally biased stretch (polar residues) spans 456-472 (PPSQGDSQSLDIPNTAD).

The protein belongs to the connexin family. Alpha-type (group II) subfamily. In terms of assembly, a connexon is composed of a hexamer of connexins. As to expression, highly abundant in skeletal muscle. Also detected in testis.

The protein resides in the cell membrane. It localises to the cell junction. Its subcellular location is the gap junction. One gap junction consists of a cluster of closely packed pairs of transmembrane channels, the connexons, through which materials of low MW diffuse from one cell to a neighboring cell. This Homo sapiens (Human) protein is Gap junction alpha-9 protein (GJA9).